The following is a 217-amino-acid chain: Uridylate kinase (217 aa).

6–10 (KLSGR) lines the ATP pocket. Glycine 38 contributes to the UMP binding site. The ATP site is built by glycine 39 and arginine 43. Residues aspartate 60 and 107-113 (FQPGQST) each bind UMP. ATP contacts are provided by asparagine 134, tyrosine 139, and aspartate 142.

It belongs to the UMP kinase family. Homohexamer.

The protein localises to the cytoplasm. It carries out the reaction UMP + ATP = UDP + ADP. The protein operates within pyrimidine metabolism; CTP biosynthesis via de novo pathway; UDP from UMP (UMPK route): step 1/1. With respect to regulation, inhibited by UTP. Its function is as follows. Catalyzes the reversible phosphorylation of UMP to UDP. The sequence is that of Uridylate kinase from Pyrobaculum neutrophilum (strain DSM 2338 / JCM 9278 / NBRC 100436 / V24Sta) (Thermoproteus neutrophilus).